Here is a 441-residue protein sequence, read N- to C-terminus: Xaa-Pro aminopeptidase (441 aa).

Residues aspartate 261, aspartate 272, histidine 355, glutamate 384, and glutamate 407 each coordinate Mn(2+).

It belongs to the peptidase M24B family. As to quaternary structure, homotetramer. Mn(2+) serves as cofactor.

The protein resides in the cytoplasm. The catalysed reaction is Release of any N-terminal amino acid, including proline, that is linked to proline, even from a dipeptide or tripeptide.. The polypeptide is Xaa-Pro aminopeptidase (pepP) (Escherichia coli (strain K12)).